A 60-amino-acid polypeptide reads, in one-letter code: MSALAPITGTLKKRIITDIVIGFSLGGVMASYWWWGFHKNVIDRREAFYADLAEKKKAEN.

Over 1-15 the chain is Mitochondrial matrix; the sequence is MSALAPITGTLKKRI. A helical transmembrane segment spans residues 16–38; it reads ITDIVIGFSLGGVMASYWWWGFH. The Mitochondrial intermembrane portion of the chain corresponds to 39–57; sequence KNVIDRREAFYADLAEKKK. Positions 58 to 60 are cleaved as a propeptide — removed in mature form; it reads AEN.

Belongs to the fungal cytochrome c oxidase subunit 7a family. Component of the cytochrome c oxidase (complex IV, CIV), a multisubunit enzyme composed of a catalytic core of 3 subunits and several supernumerary subunits. The complex exists as a monomer or a dimer and forms supercomplexes (SCs) in the inner mitochondrial membrane with ubiquinol-cytochrome c oxidoreductase (cytochrome b-c1 complex, complex III, CIII).

The protein localises to the mitochondrion inner membrane. The protein operates within energy metabolism; oxidative phosphorylation. Its function is as follows. Component of the cytochrome c oxidase, the last enzyme in the mitochondrial electron transport chain which drives oxidative phosphorylation. The respiratory chain contains 3 multisubunit complexes succinate dehydrogenase (complex II, CII), ubiquinol-cytochrome c oxidoreductase (cytochrome b-c1 complex, complex III, CIII) and cytochrome c oxidase (complex IV, CIV), that cooperate to transfer electrons derived from NADH and succinate to molecular oxygen, creating an electrochemical gradient over the inner membrane that drives transmembrane transport and the ATP synthase. Cytochrome c oxidase is the component of the respiratory chain that catalyzes the reduction of oxygen to water. Electrons originating from reduced cytochrome c in the intermembrane space (IMS) are transferred via the dinuclear copper A center (CU(A)) of subunit 2 and heme A of subunit 1 to the active site in subunit 1, a binuclear center (BNC) formed by heme A3 and copper B (CU(B)). The BNC reduces molecular oxygen to 2 water molecules using 4 electrons from cytochrome c in the IMS and 4 protons from the mitochondrial matrix. This Candida glabrata (strain ATCC 2001 / BCRC 20586 / JCM 3761 / NBRC 0622 / NRRL Y-65 / CBS 138) (Yeast) protein is Cytochrome c oxidase subunit 9, mitochondrial (COX9).